A 367-amino-acid chain; its full sequence is Undecaprenyl-phosphate alpha-N-acetylglucosaminyl 1-phosphate transferase (367 aa).

The next 10 helical transmembrane spans lie at L3 to F23, L46 to V66, Y69 to L89, V132 to F152, I158 to W178, I187 to L207, V213 to E233, I242 to M262, A294 to Y314, and V318 to I338.

This sequence belongs to the glycosyltransferase 4 family. WecA subfamily. Mg(2+) serves as cofactor. Requires Mn(2+) as cofactor.

The protein resides in the cell inner membrane. The enzyme catalyses di-trans,octa-cis-undecaprenyl phosphate + UDP-N-acetyl-alpha-D-glucosamine = N-acetyl-alpha-D-glucosaminyl-di-trans,octa-cis-undecaprenyl diphosphate + UMP. The protein operates within bacterial outer membrane biogenesis; LPS O-antigen biosynthesis. It participates in bacterial outer membrane biogenesis; enterobacterial common antigen biosynthesis. Functionally, catalyzes the transfer of the GlcNAc-1-phosphate moiety from UDP-GlcNAc onto the carrier lipid undecaprenyl phosphate (C55-P), yielding GlcNAc-pyrophosphoryl-undecaprenyl (GlcNAc-PP-C55). The polypeptide is Undecaprenyl-phosphate alpha-N-acetylglucosaminyl 1-phosphate transferase (Escherichia coli O157:H7).